The following is a 1444-amino-acid chain: DNA polymerase III PolC-type (1444 aa).

The Exonuclease domain maps to 428 to 584 (YCVFDVETTG…FDAEATAYLA (157 aa)).

This sequence belongs to the DNA polymerase type-C family. PolC subfamily.

Its subcellular location is the cytoplasm. The enzyme catalyses DNA(n) + a 2'-deoxyribonucleoside 5'-triphosphate = DNA(n+1) + diphosphate. Functionally, required for replicative DNA synthesis. This DNA polymerase also exhibits 3' to 5' exonuclease activity. This chain is DNA polymerase III PolC-type, found in Listeria innocua serovar 6a (strain ATCC BAA-680 / CLIP 11262).